The sequence spans 134 residues: Small ribosomal subunit protein uS9c (134 aa).

Over residues 105 to 114 (DHHLTRDARA) the composition is skewed to basic and acidic residues. Residues 105–134 (DHHLTRDARAKERKKYGLHKARKAPQYSKR) are disordered. The segment covering 115–134 (KERKKYGLHKARKAPQYSKR) has biased composition (basic residues).

The protein belongs to the universal ribosomal protein uS9 family.

The protein resides in the plastid. Its subcellular location is the cyanelle. The sequence is that of Small ribosomal subunit protein uS9c (rps9) from Cyanophora paradoxa.